The following is a 188-amino-acid chain: Adenine phosphoribosyltransferase (188 aa).

The protein belongs to the purine/pyrimidine phosphoribosyltransferase family. In terms of assembly, homodimer.

The protein localises to the cytoplasm. It catalyses the reaction AMP + diphosphate = 5-phospho-alpha-D-ribose 1-diphosphate + adenine. The protein operates within purine metabolism; AMP biosynthesis via salvage pathway; AMP from adenine: step 1/1. Its function is as follows. Catalyzes a salvage reaction resulting in the formation of AMP, that is energically less costly than de novo synthesis. This is Adenine phosphoribosyltransferase from Burkholderia lata (strain ATCC 17760 / DSM 23089 / LMG 22485 / NCIMB 9086 / R18194 / 383).